The primary structure comprises 61 residues: Photosystem II reaction center protein K (61 aa).

Residues 1-24 (MLNIFSLICICLHSTLYSSSFFLA) constitute a propeptide that is removed on maturation. A helical membrane pass occupies residues 36-56 (IVDFMPVIPLLFFLLAFVWQA).

Belongs to the PsbK family. As to quaternary structure, PSII is composed of 1 copy each of membrane proteins PsbA, PsbB, PsbC, PsbD, PsbE, PsbF, PsbH, PsbI, PsbJ, PsbK, PsbL, PsbM, PsbT, PsbX, PsbY, PsbZ, Psb30/Ycf12, at least 3 peripheral proteins of the oxygen-evolving complex and a large number of cofactors. It forms dimeric complexes.

It is found in the plastid. It localises to the chloroplast thylakoid membrane. Its function is as follows. One of the components of the core complex of photosystem II (PSII). PSII is a light-driven water:plastoquinone oxidoreductase that uses light energy to abstract electrons from H(2)O, generating O(2) and a proton gradient subsequently used for ATP formation. It consists of a core antenna complex that captures photons, and an electron transfer chain that converts photonic excitation into a charge separation. The polypeptide is Photosystem II reaction center protein K (Eucalyptus globulus subsp. globulus (Tasmanian blue gum)).